The sequence spans 505 residues: Glycerol kinase (505 aa).

Residue Thr-14 coordinates ADP. ATP-binding residues include Thr-14, Thr-15, and Ser-16. A sn-glycerol 3-phosphate-binding site is contributed by Thr-14. Arg-18 serves as a coordination point for ADP. The sn-glycerol 3-phosphate site is built by Arg-84, Glu-85, Tyr-136, and Asp-246. Residues Arg-84, Glu-85, Tyr-136, Asp-246, and Gln-247 each contribute to the glycerol site. Residues Thr-268 and Gly-311 each coordinate ADP. ATP is bound by residues Thr-268, Gly-311, Gln-315, and Gly-412. ADP-binding residues include Gly-412 and Asn-416.

This sequence belongs to the FGGY kinase family.

It carries out the reaction glycerol + ATP = sn-glycerol 3-phosphate + ADP + H(+). The protein operates within polyol metabolism; glycerol degradation via glycerol kinase pathway; sn-glycerol 3-phosphate from glycerol: step 1/1. With respect to regulation, inhibited by fructose 1,6-bisphosphate (FBP). In terms of biological role, key enzyme in the regulation of glycerol uptake and metabolism. Catalyzes the phosphorylation of glycerol to yield sn-glycerol 3-phosphate. The polypeptide is Glycerol kinase (Vibrio vulnificus (strain CMCP6)).